The primary structure comprises 276 residues: WIMGHMVNKIEQINEFLDLGANSIEVDITFDNLGYAEYTYHGFPCDCKRWCTNQENVKEYLNALSDITTPGNPKFRKEQTLVVFDLKTGGIDANRMYEGGKDFAGKILFDYWKGSENAGRAYIIISVPSIDHYKFMKGFRERFDGSAFKDLLLEKVGWDFSGNDDLDATRTAYQNAGIEALNHIWQSDGITNCIPRGLGRVNKAVSNRDSSDAFINKVYVWTVEKYSSVKDALSADVDGIMTNHPNVINGVLKEDEFKDRFKLATYEDNPWTTFKR.

The active site involves His-5. 2 residues coordinate Mg(2+): Glu-25 and Asp-27. His-41 acts as the Nucleophile in catalysis. Intrachain disulfides connect Cys-45/Cys-51 and Cys-47/Cys-193. Asp-85 lines the Mg(2+) pocket.

This sequence belongs to the arthropod phospholipase D family. Class II subfamily. It depends on Mg(2+) as a cofactor. Expressed by the venom gland.

It localises to the secreted. The catalysed reaction is an N-(acyl)-sphingosylphosphocholine = an N-(acyl)-sphingosyl-1,3-cyclic phosphate + choline. It carries out the reaction an N-(acyl)-sphingosylphosphoethanolamine = an N-(acyl)-sphingosyl-1,3-cyclic phosphate + ethanolamine. It catalyses the reaction a 1-acyl-sn-glycero-3-phosphocholine = a 1-acyl-sn-glycero-2,3-cyclic phosphate + choline. The enzyme catalyses a 1-acyl-sn-glycero-3-phosphoethanolamine = a 1-acyl-sn-glycero-2,3-cyclic phosphate + ethanolamine. Its function is as follows. Dermonecrotic toxins cleave the phosphodiester linkage between the phosphate and headgroup of certain phospholipids (sphingolipid and lysolipid substrates), forming an alcohol (often choline) and a cyclic phosphate. This toxin acts on sphingomyelin (SM). It may also act on ceramide phosphoethanolamine (CPE), lysophosphatidylcholine (LPC) and lysophosphatidylethanolamine (LPE), but not on lysophosphatidylserine (LPS), and lysophosphatidylglycerol (LPG). It acts by transphosphatidylation, releasing exclusively cyclic phosphate products as second products. Induces dermonecrosis, hemolysis, increased vascular permeability, edema, inflammatory response, and platelet aggregation. This chain is Dermonecrotic toxin LlSicTox-alphaIV1ii, found in Loxosceles laeta (South American recluse spider).